Here is a 212-residue protein sequence, read N- to C-terminus: Deoxyribose-phosphate aldolase (212 aa).

Residue Asp-90 is the Proton donor/acceptor of the active site. Residue Lys-151 is the Schiff-base intermediate with acetaldehyde of the active site. Residue Lys-176 is the Proton donor/acceptor of the active site.

This sequence belongs to the DeoC/FbaB aldolase family. DeoC type 1 subfamily.

The protein resides in the cytoplasm. It carries out the reaction 2-deoxy-D-ribose 5-phosphate = D-glyceraldehyde 3-phosphate + acetaldehyde. The protein operates within carbohydrate degradation; 2-deoxy-D-ribose 1-phosphate degradation; D-glyceraldehyde 3-phosphate and acetaldehyde from 2-deoxy-alpha-D-ribose 1-phosphate: step 2/2. In terms of biological role, catalyzes a reversible aldol reaction between acetaldehyde and D-glyceraldehyde 3-phosphate to generate 2-deoxy-D-ribose 5-phosphate. The protein is Deoxyribose-phosphate aldolase of Halobacterium salinarum (strain ATCC 29341 / DSM 671 / R1).